Reading from the N-terminus, the 189-residue chain is MKIGVLGIQGDVYEHYTAIRPLKNKYKVEAYIIRSPEEINEMDGIIIPGGESTTITRFLSRYINIINENVRNGMKIMGTCAGAIILSKDTGDPRVHGTGIMDIKIQRNAYGRQIDSFIDAVNIKNIGTFNAVFIRAPVIDDPGKTSVLGEYNGKPVIVENENAIAMTFHPELTGDLRVHEYFLRKVMGN.

Residue 50 to 52 participates in L-glutamine binding; sequence GES. The active-site Nucleophile is the Cys-80. Residues Arg-107 and 134–135 each bind L-glutamine; that span reads IR. Active-site charge relay system residues include His-169 and Glu-171.

Belongs to the glutaminase PdxT/SNO family. As to quaternary structure, in the presence of PdxS, forms a dodecamer of heterodimers. Only shows activity in the heterodimer.

It catalyses the reaction aldehydo-D-ribose 5-phosphate + D-glyceraldehyde 3-phosphate + L-glutamine = pyridoxal 5'-phosphate + L-glutamate + phosphate + 3 H2O + H(+). The enzyme catalyses L-glutamine + H2O = L-glutamate + NH4(+). It functions in the pathway cofactor biosynthesis; pyridoxal 5'-phosphate biosynthesis. Functionally, catalyzes the hydrolysis of glutamine to glutamate and ammonia as part of the biosynthesis of pyridoxal 5'-phosphate. The resulting ammonia molecule is channeled to the active site of PdxS. The chain is Pyridoxal 5'-phosphate synthase subunit PdxT from Picrophilus torridus (strain ATCC 700027 / DSM 9790 / JCM 10055 / NBRC 100828 / KAW 2/3).